The primary structure comprises 88 residues: Small ribosomal subunit protein uS17 (88 aa).

This sequence belongs to the universal ribosomal protein uS17 family. Part of the 30S ribosomal subunit.

One of the primary rRNA binding proteins, it binds specifically to the 5'-end of 16S ribosomal RNA. The polypeptide is Small ribosomal subunit protein uS17 (Marinobacter nauticus (strain ATCC 700491 / DSM 11845 / VT8) (Marinobacter aquaeolei)).